The primary structure comprises 491 residues: Chromosomal replication initiator protein DnaA (491 aa).

Residues 1–69 (MTTWDKCLKK…TIQECHGNDL (69 aa)) form a domain I, interacts with DnaA modulators region. The tract at residues 69–154 (LIIEYSNKKF…KEDEEYSFGL (86 aa)) is domain II. A domain III, AAA+ region region spans residues 155-371 (PLKEKYVFDS…GALNRVLTTS (217 aa)). Gly199, Gly201, Lys202, and Thr203 together coordinate ATP. Positions 372-491 (KFNHKDPTIE…YELLLDKISR (120 aa)) are domain IV, binds dsDNA.

The protein belongs to the DnaA family. In terms of assembly, oligomerizes as a right-handed, spiral filament on DNA at oriC.

It is found in the cytoplasm. Plays an essential role in the initiation and regulation of chromosomal replication. ATP-DnaA binds to the origin of replication (oriC) to initiate formation of the DNA replication initiation complex once per cell cycle. Binds the DnaA box (a 9 base pair repeat at the origin) and separates the double-stranded (ds)DNA. Forms a right-handed helical filament on oriC DNA; dsDNA binds to the exterior of the filament while single-stranded (ss)DNA is stabiized in the filament's interior. The ATP-DnaA-oriC complex binds and stabilizes one strand of the AT-rich DNA unwinding element (DUE), permitting loading of DNA polymerase. After initiation quickly degrades to an ADP-DnaA complex that is not apt for DNA replication. Binds acidic phospholipids. The chain is Chromosomal replication initiator protein DnaA from Francisella tularensis subsp. holarctica (strain LVS).